Here is a 200-residue protein sequence, read N- to C-terminus: MKHIYEKGTSDNVLLLLHGTGGNEHDLLSLGRFIDPDAHLLGVRGSVLENGMPRFFKRLSEGVFDEKDLVVRTRELKDFIDEAAETHQFNRGRVIAVGYSNGANIAASLLFHYKDVLKGAILHHPMVPIRGIELPDMAGLPVFIGAGKYDPLCTKEESEELYRYLRDSGASASVYWQDGGHQLTQHEAEQAREWYKEAIV.

Residues serine 100, aspartate 150, and histidine 181 each act as charge relay system in the active site.

This sequence belongs to the AB hydrolase superfamily. AB hydrolase 2 family.

The protein resides in the cytoplasm. Its function is as follows. Putative hydrolase that may contribute to the degradation of aromatic compounds. This Bacillus subtilis (strain 168) protein is Putative hydrolase MhqD (mhqD).